The primary structure comprises 140 residues: MITLIGTSLAKKGLVFIFYGGSSKCESCRFNRTCLNLEKGRKYIITNVKKVTHKCPLHKNGRVQTVEVEPATIRTAVETKKAYKGSTIIFRNPTCVCECENHDICYPEGLYNDDKCQIEEIGPELVCKNGRNLTEVILSH.

It belongs to the UPF0179 family.

This is UPF0179 protein Msp_0996 from Methanosphaera stadtmanae (strain ATCC 43021 / DSM 3091 / JCM 11832 / MCB-3).